Reading from the N-terminus, the 113-residue chain is Large ribosomal subunit protein uL22 (113 aa).

Belongs to the universal ribosomal protein uL22 family. In terms of assembly, part of the 50S ribosomal subunit.

This protein binds specifically to 23S rRNA; its binding is stimulated by other ribosomal proteins, e.g. L4, L17, and L20. It is important during the early stages of 50S assembly. It makes multiple contacts with different domains of the 23S rRNA in the assembled 50S subunit and ribosome. Its function is as follows. The globular domain of the protein is located near the polypeptide exit tunnel on the outside of the subunit, while an extended beta-hairpin is found that lines the wall of the exit tunnel in the center of the 70S ribosome. The polypeptide is Large ribosomal subunit protein uL22 (Desulforamulus reducens (strain ATCC BAA-1160 / DSM 100696 / MI-1) (Desulfotomaculum reducens)).